The chain runs to 784 residues: N-alpha-acetyltransferase 35, NatC auxiliary subunit homolog (784 aa).

3 disordered regions span residues 1-23 (MYPS…VAEP), 320-353 (NTLD…PPAF), and 606-630 (SKTQ…NKKT). Residues 617–630 (KNRKAAKPKKNKKT) show a composition bias toward basic residues.

Belongs to the MAK10 family. In terms of assembly, component of the N-terminal acetyltransferase C (NatC) complex, which is composed of Naa35, Sbat/Naa38 and Naa30A.

The protein resides in the cytoplasm. Its function is as follows. Auxillary component of the N-terminal acetyltransferase C (NatC) complex which catalyzes acetylation of N-terminal methionine residues. The protein is N-alpha-acetyltransferase 35, NatC auxiliary subunit homolog of Drosophila melanogaster (Fruit fly).